The primary structure comprises 478 residues: Chromosomal replication initiator protein DnaA (478 aa).

The interval M1–Y71 is domain I, interacts with DnaA modulators. The domain II stretch occupies residues Y71–G136. The segment at M137–A353 is domain III, AAA+ region. ATP contacts are provided by G181, G183, K184, and T185. Residues E354–L478 are domain IV, binds dsDNA.

This sequence belongs to the DnaA family. In terms of assembly, oligomerizes as a right-handed, spiral filament on DNA at oriC.

Its subcellular location is the cytoplasm. In terms of biological role, plays an essential role in the initiation and regulation of chromosomal replication. ATP-DnaA binds to the origin of replication (oriC) to initiate formation of the DNA replication initiation complex once per cell cycle. Binds the DnaA box (a 9 base pair repeat at the origin) and separates the double-stranded (ds)DNA. Forms a right-handed helical filament on oriC DNA; dsDNA binds to the exterior of the filament while single-stranded (ss)DNA is stabiized in the filament's interior. The ATP-DnaA-oriC complex binds and stabilizes one strand of the AT-rich DNA unwinding element (DUE), permitting loading of DNA polymerase. After initiation quickly degrades to an ADP-DnaA complex that is not apt for DNA replication. Binds acidic phospholipids. The sequence is that of Chromosomal replication initiator protein DnaA from Chloroflexus aggregans (strain MD-66 / DSM 9485).